The primary structure comprises 415 residues: SNF1 protein kinase subunit beta-2 (415 aa).

Disordered regions lie at residues 1–43 (MGTT…EMDA), 55–158 (KCSD…PSEI), and 249–276 (EKNP…SSIA). A lipid anchor (N-myristoyl glycine) is attached at glycine 2. The span at 9–19 (AQKKQTTKKCR) shows a compositional bias: basic residues. Polar residues predominate over residues 55-69 (KCSDSQDAGQPSREG). Serine 66 bears the Phosphoserine mark. 2 stretches are compositionally biased toward basic and acidic residues: residues 122–150 (PKQD…RAKE) and 249–264 (EKNP…EADS). The segment at 154 to 335 (GPSEIKSSLM…LDRQQSNTDT (182 aa)) is kinase-interacting sequence (KIS); required for interaction with SNF1. Serine 298 carries the post-translational modification Phosphoserine. The segment at 336–415 (SWLTPPQLPP…QILYTPIESS (80 aa)) is association with SNF1 kinase complex (ASC) domain; required for interaction with SNF4.

Belongs to the 5'-AMP-activated protein kinase beta subunit family. Component of the SNF1 kinase complex, a heterotrimeric complex composed of the catalytic alpha subunit SNF1, one of the three related beta subunits SIP1, SIP2 or GAL83, and the regulatory gamma subunit SNF4. The beta subunit serves as a bridge between the catalytic and the regulatory subunit. Interacts (via KIS domain) with SNF1. Interacts (via ASC domain) with SNF4. Post-translationally, phosphorylated by SNF1 in vitro.

It is found in the cytoplasm. The protein localises to the cell membrane. Functionally, beta subunit of the SNF1 kinase complex, which is required for transcriptional, metabolic, and developmental adaptations in response to glucose limitation. Has a structural role, mediating heterotrimer formation, and a regulatory role, defining carbon source-regulated subcellular location and substrate specificity of the SNF1 kinase complex. Involved in the regulation of aging. Acts as a negative regulator of nuclear SNF1 activity in young cells by sequestering its activating gamma subunit at the plasma membrane. In Saccharomyces cerevisiae (strain ATCC 204508 / S288c) (Baker's yeast), this protein is SNF1 protein kinase subunit beta-2 (SIP2).